The following is a 595-amino-acid chain: Quinoprotein alcohol dehydrogenase PedH (595 aa).

The signal sequence occupies residues 1–27 (MTRSPRRPLFAVSLVLSAMLLAGAAHA). Glutamine 87 lines the pyrroloquinoline quinone pocket. Residues cysteine 131 and cysteine 132 are joined by a disulfide bond. Pyrroloquinoline quinone is bound by residues arginine 137, serine 181, glycine 197, and glycine 198. Position 199 (glutamate 199) interacts with Pr(3+). Tryptophan 263 is a binding site for pyrroloquinoline quinone. Pr(3+) is bound by residues asparagine 281, aspartate 323, and aspartate 325. Aspartate 323 functions as the Proton acceptor in the catalytic mechanism. Residues arginine 350, asparagine 417, tryptophan 493, and alanine 557 each contribute to the pyrroloquinoline quinone site.

It belongs to the bacterial PQQ dehydrogenase family. Pr(3+) serves as cofactor. The cofactor is Nd(3+). La(3+) is required as a cofactor. It depends on Ce(3+) as a cofactor. Requires Sm(3+) as cofactor. Pyrroloquinoline quinone serves as cofactor. In terms of processing, the disulfide ring formed between the two adjacent cysteine residues Cys-131 and Cys-132 is essential for efficient electron transfer at pH 7 from PedH to its natural electron acceptor cytochrome c550.

Its subcellular location is the periplasm. The enzyme catalyses a primary alcohol + 2 Fe(III)-[cytochrome c] = an aldehyde + 2 Fe(II)-[cytochrome c] + 2 H(+). It carries out the reaction ethanol + 2 Fe(III)-[cytochrome c] = acetaldehyde + 2 Fe(II)-[cytochrome c] + 2 H(+). The catalysed reaction is butan-1-ol + 2 Fe(III)-[cytochrome c] = butanal + 2 Fe(II)-[cytochrome c] + 2 H(+). It catalyses the reaction butan-2-ol + 2 Fe(III)-[cytochrome c] = butan-2-one + 2 Fe(II)-[cytochrome c] + 2 H(+). The enzyme catalyses 2-phenylethanol + 2 Fe(III)-[cytochrome c] = 2-phenylacetaldehyde + 2 Fe(II)-[cytochrome c] + 2 H(+). It carries out the reaction octan-1-ol + 2 Fe(III)-[cytochrome c] = octanal + 2 Fe(II)-[cytochrome c] + 2 H(+). The catalysed reaction is hexan-1-ol + 2 Fe(III)-[cytochrome c] = hexanal + 2 Fe(II)-[cytochrome c] + 2 H(+). It catalyses the reaction cinnamyl alcohol + 2 Fe(III)-[cytochrome c] = cinnamaldehyde + 2 Fe(II)-[cytochrome c] + 2 H(+). The enzyme catalyses farnesol + 2 Fe(III)-[cytochrome c] = farnesal + 2 Fe(II)-[cytochrome c] + 2 H(+). It carries out the reaction an aldehyde + 2 Fe(III)-[cytochrome c] + H2O = a carboxylate + 2 Fe(II)-[cytochrome c] + 3 H(+). The catalysed reaction is acetaldehyde + 2 Fe(III)-[cytochrome c] + H2O = 2 Fe(II)-[cytochrome c] + acetate + 3 H(+). It catalyses the reaction butanal + 2 Fe(III)-[cytochrome c] + H2O = butanoate + 2 Fe(II)-[cytochrome c] + 3 H(+). The enzyme catalyses hexanal + 2 Fe(III)-[cytochrome c] + H2O = hexanoate + 2 Fe(II)-[cytochrome c] + 3 H(+). It carries out the reaction octanal + 2 Fe(III)-[cytochrome c] + H2O = octanoate + 2 Fe(II)-[cytochrome c] + 3 H(+). Alcohol dehydrogenase that catalyzes the oxidation of a range of substrates, including linear and aromatic primary and secondary alcohols, as well as aldehydes, but only in the presence of lanthanides, allowing bacterial growth with a variety of volatile organic compounds (VOCs) as carbon and energy sources. Is also involved in the transcriptional regulation of pedE and pedH, most likely acting as a lanthanide sensory module. Uses a specific inducible cytochrome c550, encoded by the adjacent gene in the locus, as electron acceptor. This Pseudomonas putida (strain ATCC 47054 / DSM 6125 / CFBP 8728 / NCIMB 11950 / KT2440) protein is Quinoprotein alcohol dehydrogenase PedH.